Consider the following 353-residue polypeptide: Phospho-N-acetylmuramoyl-pentapeptide-transferase (353 aa).

The next 10 helical transmembrane spans lie at 22–42 (FAFF…ITWA), 65–85 (TPTM…LFCI), 88–108 (DNIF…IGLI), 129–149 (LLAQ…SSEL), 161–181 (PLFD…ISSS), 192–212 (GLAT…LYLS), 228–248 (GLGE…GFLW), 256–276 (VFMG…LAII), 281–301 (ILLL…ILQV), and 330–350 (KIIV…LASI).

Belongs to the glycosyltransferase 4 family. MraY subfamily. The cofactor is Mg(2+).

The protein localises to the cell inner membrane. The catalysed reaction is UDP-N-acetyl-alpha-D-muramoyl-L-alanyl-gamma-D-glutamyl-meso-2,6-diaminopimeloyl-D-alanyl-D-alanine + di-trans,octa-cis-undecaprenyl phosphate = di-trans,octa-cis-undecaprenyl diphospho-N-acetyl-alpha-D-muramoyl-L-alanyl-D-glutamyl-meso-2,6-diaminopimeloyl-D-alanyl-D-alanine + UMP. Its pathway is cell wall biogenesis; peptidoglycan biosynthesis. In terms of biological role, catalyzes the initial step of the lipid cycle reactions in the biosynthesis of the cell wall peptidoglycan: transfers peptidoglycan precursor phospho-MurNAc-pentapeptide from UDP-MurNAc-pentapeptide onto the lipid carrier undecaprenyl phosphate, yielding undecaprenyl-pyrophosphoryl-MurNAc-pentapeptide, known as lipid I. This is Phospho-N-acetylmuramoyl-pentapeptide-transferase from Campylobacter jejuni subsp. jejuni serotype O:6 (strain 81116 / NCTC 11828).